Here is a 145-residue protein sequence, read N- to C-terminus: Mannitol-specific phosphotransferase enzyme IIA component (145 aa).

The 141-residue stretch at 4–144 folds into the PTS EIIA type-2 domain; that stretch reads PILKKENIVL…EEILSILNEV (141 aa). His-64 serves as the catalytic Tele-phosphohistidine intermediate. His-64 is subject to Phosphohistidine; by HPr.

It is found in the cytoplasm. Functionally, the phosphoenolpyruvate-dependent sugar phosphotransferase system (sugar PTS), a major carbohydrate active transport system, catalyzes the phosphorylation of incoming sugar substrates concomitantly with their translocation across the cell membrane. The enzyme II CmtAB PTS system is involved in D-mannitol transport. The polypeptide is Mannitol-specific phosphotransferase enzyme IIA component (Geobacillus stearothermophilus (Bacillus stearothermophilus)).